We begin with the raw amino-acid sequence, 64 residues long: Conotoxin Pu3.5 (64 aa).

The signal sequence occupies residues 1–16; the sequence is LGVLLTICLLLFPLTA. Positions 17 to 49 are excised as a propeptide; the sequence is VPLDGDQPADQPAGRMQDDISSEQHPFFDPVKR. Intrachain disulfides connect C50–C63, C51–C58, and C54–C62.

Belongs to the conotoxin M superfamily. As to expression, expressed by the venom duct.

Its subcellular location is the secreted. In Conus pulicarius (Flea-bitten cone), this protein is Conotoxin Pu3.5.